The following is a 220-amino-acid chain: NADH-quinone oxidoreductase subunit I (220 aa).

4Fe-4S ferredoxin-type domains follow at residues 71-102 and 112-141; these read LQRLLDSGSERCIGCGLCEKICTSNCIRIITH and DSYTINLGRCIYCGLCAEVCPELAIVMGNR. 8 residues coordinate [4Fe-4S] cluster: cysteine 82, cysteine 85, cysteine 88, cysteine 92, cysteine 121, cysteine 124, cysteine 127, and cysteine 131. The tract at residues 187-220 is disordered; that stretch reads MQATPLDYVQEPSKEESKEETPTRSESHKGDENV. The span at 198–220 shows a compositional bias: basic and acidic residues; it reads PSKEESKEETPTRSESHKGDENV.

It belongs to the complex I 23 kDa subunit family. In terms of assembly, NDH-1 is composed of 14 different subunits. Subunits NuoA, H, J, K, L, M, N constitute the membrane sector of the complex. The cofactor is [4Fe-4S] cluster.

It is found in the cell inner membrane. It catalyses the reaction a quinone + NADH + 5 H(+)(in) = a quinol + NAD(+) + 4 H(+)(out). In terms of biological role, NDH-1 shuttles electrons from NADH, via FMN and iron-sulfur (Fe-S) centers, to quinones in the respiratory chain. The immediate electron acceptor for the enzyme in this species is believed to be ubiquinone. Couples the redox reaction to proton translocation (for every two electrons transferred, four hydrogen ions are translocated across the cytoplasmic membrane), and thus conserves the redox energy in a proton gradient. This is NADH-quinone oxidoreductase subunit I from Helicobacter pylori (strain G27).